Here is a 42-residue protein sequence, read N- to C-terminus: MADKPDMGEINSFDKAKLKKTETQEKNTLPTKETIEQEKQAK.

Basic and acidic residues-rich tracts occupy residues 1-25 (MADKPDMGEINSFDKAKLKKTETQE) and 33-42 (ETIEQEKQAK). Residues 1–42 (MADKPDMGEINSFDKAKLKKTETQEKNTLPTKETIEQEKQAK) form a disordered region. At alanine 2 the chain carries N-acetylalanine. Lysine 4 carries the N6-acetyllysine modification. At serine 12 the chain carries Phosphoserine. At lysine 15 the chain carries N6-acetyllysine. Threonine 21, threonine 23, and threonine 34 each carry phosphothreonine. Lysine 39 carries the N6-acetyllysine modification.

Belongs to the thymosin beta family.

The protein resides in the cytoplasm. The protein localises to the cytoskeleton. Functionally, plays an important role in the organization of the cytoskeleton. Binds to and sequesters actin monomers (G actin) and therefore inhibits actin polymerization. The protein is Thymosin beta-10 (TMSB10) of Sus scrofa (Pig).